An 87-amino-acid polypeptide reads, in one-letter code: uncharacterized protein (87 aa).

This is an uncharacterized protein from Saccharomyces cerevisiae (strain ATCC 204508 / S288c) (Baker's yeast).